A 77-amino-acid polypeptide reads, in one-letter code: NAD(P)H-quinone oxidoreductase subunit L (77 aa).

The next 2 membrane-spanning stretches (helical) occupy residues 12–32 (LVAY…ILFY) and 47–67 (LIVY…SPFL).

Belongs to the complex I NdhL subunit family. NDH-1 can be composed of about 15 different subunits; different subcomplexes with different compositions have been identified which probably have different functions.

It is found in the cellular thylakoid membrane. It catalyses the reaction a plastoquinone + NADH + (n+1) H(+)(in) = a plastoquinol + NAD(+) + n H(+)(out). It carries out the reaction a plastoquinone + NADPH + (n+1) H(+)(in) = a plastoquinol + NADP(+) + n H(+)(out). Its function is as follows. NDH-1 shuttles electrons from an unknown electron donor, via FMN and iron-sulfur (Fe-S) centers, to quinones in the respiratory and/or the photosynthetic chain. The immediate electron acceptor for the enzyme in this species is believed to be plastoquinone. Couples the redox reaction to proton translocation, and thus conserves the redox energy in a proton gradient. Cyanobacterial NDH-1 also plays a role in inorganic carbon-concentration. This is NAD(P)H-quinone oxidoreductase subunit L from Prochlorococcus marinus subsp. pastoris (strain CCMP1986 / NIES-2087 / MED4).